The primary structure comprises 515 residues: MQLNPAEISDLIKAKIENLSVNAEVRTRGTVISVTDGIVRIHGLSDAMQGEMLEFPGNTFGLAMNLERDSVGAVVLGEHEHIKEGDTVTCTGRILEVPVGRELVGRVVDALGRPIDGKGPINTTLTAPIEKIAPGVIARKSVDQPMQTGLKAIDSMVPVGRGQRELIIGDRQTGKTAVALDAIVNQKGTGVICIYVAIGQKASSIANVVRKLEEHGAMEHTIVVAATASEAAALQYIAPYSGCTMGEFFRDRGEDALIVYDDLSKQAVAYRQISLLLRRPPGREAYPGDVFYLHSRLLERAARVNEHEVEKLTNGEVKGKTGSLTALPIIETQAGDVSAFVPTNVISITDGQIFLETDLFNAGIRPAINAGISVSRVGGAAQTKVIKKLGGGIRLALAQYRELAAFSQFASDLDEATRKQLEHGEVVTELMKQKQFSTLNTAEMALTLWAINNGSYSDVPVAKALAFESEFLSFVRTQHPEVLEAVNASGAMSDESEKTLEAAMKSFKSSYAYQA.

169 to 176 (GDRQTGKT) provides a ligand contact to ATP.

It belongs to the ATPase alpha/beta chains family. In terms of assembly, F-type ATPases have 2 components, CF(1) - the catalytic core - and CF(0) - the membrane proton channel. CF(1) has five subunits: alpha(3), beta(3), gamma(1), delta(1), epsilon(1). CF(0) has three main subunits: a(1), b(2) and c(9-12). The alpha and beta chains form an alternating ring which encloses part of the gamma chain. CF(1) is attached to CF(0) by a central stalk formed by the gamma and epsilon chains, while a peripheral stalk is formed by the delta and b chains.

The protein resides in the cell inner membrane. It catalyses the reaction ATP + H2O + 4 H(+)(in) = ADP + phosphate + 5 H(+)(out). In terms of biological role, produces ATP from ADP in the presence of a proton gradient across the membrane. The alpha chain is a regulatory subunit. The sequence is that of ATP synthase subunit alpha from Neisseria meningitidis serogroup A / serotype 4A (strain DSM 15465 / Z2491).